The following is a 360-amino-acid chain: Photosystem II protein D1 (360 aa).

Helical transmembrane passes span 30 to 47, 119 to 134, and 143 to 157; these read YVGWFGVLMIPCLLAAAA, HFLIGISAYMGRQWEL, and WICVAYSAPVSAAFA. His119 lines the chlorophyll a pocket. Tyr127 contacts pheophytin a. The [CaMn4O5] cluster site is built by Asp171 and Glu190. The helical transmembrane segment at 198-219 threads the bilayer; it reads FHMAGVAGMFGGSLFSAMHGSL. Chlorophyll a is bound at residue His199. A quinone-binding positions include His216 and 265-266; that span reads SF. His216 contributes to the Fe cation binding site. Position 273 (His273) interacts with Fe cation. A helical transmembrane segment spans residues 275–289; that stretch reads FLAVFPVVCVWLTSM. 4 residues coordinate [CaMn4O5] cluster: His333, Glu334, Asp343, and Ala345. A propeptide spanning residues 346–360 is cleaved from the precursor; that stretch reads AAESTTVALTAPAIG.

This sequence belongs to the reaction center PufL/M/PsbA/D family. As to quaternary structure, PSII is composed of 1 copy each of membrane proteins PsbA, PsbB, PsbC, PsbD, PsbE, PsbF, PsbH, PsbI, PsbJ, PsbK, PsbL, PsbM, PsbT, PsbX, PsbY, Psb30/Ycf12, peripheral proteins PsbO, CyanoQ (PsbQ), PsbU, PsbV and a large number of cofactors. It forms dimeric complexes. The D1/D2 heterodimer binds P680, chlorophylls that are the primary electron donor of PSII, and subsequent electron acceptors. It shares a non-heme iron and each subunit binds pheophytin, quinone, additional chlorophylls, carotenoids and lipids. D1 provides most of the ligands for the Mn4-Ca-O5 cluster of the oxygen-evolving complex (OEC). There is also a Cl(-1) ion associated with D1 and D2, which is required for oxygen evolution. The PSII complex binds additional chlorophylls, carotenoids and specific lipids. is required as a cofactor. Tyr-162 forms a radical intermediate that is referred to as redox-active TyrZ, YZ or Y-Z. Post-translationally, C-terminally processed by CtpA; processing is essential to allow assembly of the oxygen-evolving complex and thus photosynthetic growth.

It localises to the cellular thylakoid membrane. The enzyme catalyses 2 a plastoquinone + 4 hnu + 2 H2O = 2 a plastoquinol + O2. In terms of biological role, photosystem II (PSII) is a light-driven water:plastoquinone oxidoreductase that uses light energy to abstract electrons from H(2)O, generating O(2) and a proton gradient subsequently used for ATP formation. It consists of a core antenna complex that captures photons, and an electron transfer chain that converts photonic excitation into a charge separation. The D1/D2 (PsbA/PsbD) reaction center heterodimer binds P680, the primary electron donor of PSII as well as several subsequent electron acceptors. The protein is Photosystem II protein D1 of Prochlorococcus marinus (strain MIT 9515).